We begin with the raw amino-acid sequence, 268 residues long: F-actin-capping protein subunit beta (268 aa).

Belongs to the F-actin-capping protein beta subunit family. In terms of assembly, component of the F-actin capping complex, composed of a heterodimer of an alpha and a beta subunit.

It is found in the cytoplasm. It localises to the cytoskeleton. The protein localises to the actin patch. Its subcellular location is the nucleus. Its function is as follows. F-actin-capping proteins bind in a Ca(2+)-independent manner to the fast growing ends of actin filaments (barbed end) thereby blocking the exchange of subunits at these ends. Unlike other capping proteins (such as gelsolin and severin), these proteins do not sever actin filaments. Competes with formin cdc12 for attachment to the actin filaments barbed ends. Slowly replaces cdc12 on the barbed ends in preparation for filament disassembly during contractile ring constriction. The sequence is that of F-actin-capping protein subunit beta (acp2) from Schizosaccharomyces pombe (strain 972 / ATCC 24843) (Fission yeast).